The sequence spans 258 residues: Global transcriptional regulator CodY (258 aa).

The tract at residues 1 to 156 is GAF domain; the sequence is MSSLLSKTRR…SATIVGMEML (156 aa). A DNA-binding region (H-T-H motif) is located at residues 204 to 223; sequence ASKIADKVGITRSVIVNALR.

Belongs to the CodY family.

The protein resides in the cytoplasm. Functionally, DNA-binding global transcriptional regulator which is involved in the adaptive response to starvation and acts by directly or indirectly controlling the expression of numerous genes in response to nutrient availability. During rapid exponential growth, CodY is highly active and represses genes whose products allow adaptation to nutrient depletion. The polypeptide is Global transcriptional regulator CodY (Clostridium botulinum (strain Eklund 17B / Type B)).